Reading from the N-terminus, the 744-residue chain is C-type polyheme cytochrome OmcB (744 aa).

Residues 1 to 23 (MSRKVTKYSAVLAVSLFAAALAG) form the signal peptide. Residue Cys24 is the site of N-palmitoyl cysteine attachment. Cys24 carries S-diacylglycerol cysteine lipidation. Heme c-binding residues include Cys48, Cys51, His52, Cys81, Cys84, His85, Cys107, Cys110, His111, Cys141, Cys144, His145, Cys185, Cys188, His189, Cys225, Cys228, His229, Cys303, Cys306, His307, Cys382, Cys385, His386, Cys430, Cys433, His434, Cys480, Cys483, His484, Cys555, Cys558, His559, Cys587, Cys590, and His591.

Post-translationally, binds 12 heme c groups per subunit.

The protein resides in the cell outer membrane. Functionally, involved in anaerobic respiration with Fe(3+) as terminal electron acceptor. Acts as an electron-transport mediator in the dissimilatory reduction of Fe(3+). The polypeptide is C-type polyheme cytochrome OmcB (omcB) (Geobacter sulfurreducens (strain DL-1 / KN400)).